The primary structure comprises 293 residues: Pantothenate synthetase (293 aa).

30–37 (MGYLHKGH) contributes to the ATP binding site. His37 acts as the Proton donor in catalysis. (R)-pantoate is bound at residue Gln61. Beta-alanine is bound at residue Gln61. Residue 147-150 (GEKD) participates in ATP binding. Gln153 is a (R)-pantoate binding site. ATP is bound by residues Val176 and 184-187 (CSSR).

Belongs to the pantothenate synthetase family. As to quaternary structure, homodimer.

Its subcellular location is the cytoplasm. It catalyses the reaction (R)-pantoate + beta-alanine + ATP = (R)-pantothenate + AMP + diphosphate + H(+). It participates in cofactor biosynthesis; (R)-pantothenate biosynthesis; (R)-pantothenate from (R)-pantoate and beta-alanine: step 1/1. Functionally, catalyzes the condensation of pantoate with beta-alanine in an ATP-dependent reaction via a pantoyl-adenylate intermediate. The sequence is that of Pantothenate synthetase from Brucella melitensis biotype 2 (strain ATCC 23457).